Consider the following 308-residue polypeptide: Olfactory receptor 5H19 (308 aa).

The Extracellular segment spans residues Met1–Phe27. Residue Asn4 is glycosylated (N-linked (GlcNAc...) asparagine). A helical membrane pass occupies residues Leu28–Ile48. Over Trp49–His55 the chain is Cytoplasmic. The helical transmembrane segment at Ile56–Val76 threads the bilayer. Topologically, residues Val77–Thr92 are extracellular. The chain crosses the membrane as a helical span at residues Leu93–Leu113. An intrachain disulfide couples Cys96 to Cys188. Residues Leu114–Leu143 are Cytoplasmic-facing. Residues Ile144 to Arg164 traverse the membrane as a helical segment. Over Leu165–Ile197 the chain is Extracellular. A helical transmembrane segment spans residues Val198–Thr218. The Cytoplasmic segment spans residues Ile219–Ser238. The chain crosses the membrane as a helical span at residues Thr239 to Val259. Residues His260–Asp270 are Extracellular-facing. A helical transmembrane segment spans residues Met271–Leu291. At Arg292–Val308 the chain is on the cytoplasmic side.

This sequence belongs to the G-protein coupled receptor 1 family.

It localises to the cell membrane. Its function is as follows. Potential odorant receptor. The protein is Olfactory receptor 5H19 of Mus musculus (Mouse).